We begin with the raw amino-acid sequence, 412 residues long: Proteasome-activating nucleotidase (412 aa).

Residues 18-72 (YRYLVDRVAGMESQNQELKEQIRQLESDKRYIETQKIRYEREVRKLKSEIEHLKT) are a coiled coil. ATP-binding positions include 197–202 (GTGKTL) and histidine 336. The docks into pockets in the proteasome alpha-ring to cause gate opening stretch occupies residues 410 to 412 (MFA).

This sequence belongs to the AAA ATPase family. Homohexamer. The hexameric complex has a two-ring architecture resembling a top hat that caps the 20S proteasome core at one or both ends. Upon ATP-binding, the C-terminus of PAN interacts with the alpha-rings of the proteasome core by binding to the intersubunit pockets.

The protein resides in the cytoplasm. Its function is as follows. ATPase which is responsible for recognizing, binding, unfolding and translocation of substrate proteins into the archaeal 20S proteasome core particle. Is essential for opening the gate of the 20S proteasome via an interaction with its C-terminus, thereby allowing substrate entry and access to the site of proteolysis. Thus, the C-termini of the proteasomal ATPase function like a 'key in a lock' to induce gate opening and therefore regulate proteolysis. Unfolding activity requires energy from ATP hydrolysis, whereas ATP binding alone promotes ATPase-20S proteasome association which triggers gate opening, and supports translocation of unfolded substrates. The chain is Proteasome-activating nucleotidase from Methanospirillum hungatei JF-1 (strain ATCC 27890 / DSM 864 / NBRC 100397 / JF-1).